Here is a 748-residue protein sequence, read N- to C-terminus: Semaphorin-3B (748 aa).

Residues Met1–Ala25 form the signal peptide. The 483-residue stretch at Arg30 to Leu512 folds into the Sema domain. A glycan (N-linked (GlcNAc...) asparagine) is linked at Asn82. Cys102 and Cys113 are joined by a disulfide. The N-linked (GlcNAc...) asparagine glycan is linked to Asn124. Disulfide bonds link Cys131-Cys140, Cys268-Cys379, Cys292-Cys339, Cys515-Cys533, and Cys643-Cys709. The Ig-like C2-type domain occupies Pro561–Leu659. The tract at residues Met708–Trp748 is disordered. The span at His732–Pro742 shows a compositional bias: basic and acidic residues.

This sequence belongs to the semaphorin family.

Its subcellular location is the secreted. Functionally, inhibits axonal extension by providing local signals to specify territories inaccessible for growing axons. This is Semaphorin-3B (Sema3b) from Mus musculus (Mouse).